The primary structure comprises 520 residues: Cyclic GMP-AMP synthase-like receptor (520 aa).

ATP-binding positions include serine 68 and 80–82 (EFD). Glutamate 80, aspartate 82, and aspartate 198 together coordinate Mg(2+). Residue aspartate 198 coordinates GTP. An ATP-binding site is contributed by lysine 264. Mn(2+) is bound by residues leucine 288 and aspartate 294.

It belongs to the mab-21 family. The cofactor is Mg(2+). Mn(2+) is required as a cofactor.

The catalysed reaction is GTP + ATP = 2',3'-cGAMP + 2 diphosphate. It catalyses the reaction GTP + ATP = pppGp(2'-5')A + diphosphate. The enzyme catalyses pppGp(2'-5')A = 2',3'-cGAMP + diphosphate. Functionally, nucleotidyltransferase that catalyzes the formation of cyclic GMP-AMP (2',3'-cGAMP) from ATP and GTP and plays a key role in innate immunity. Acts as a key sensor of double-stranded RNA (dsRNA), the presence of dsRNA in the cytoplasm being a danger signal that triggers the immune responses. Directly binds dsRNA, activating the nucleotidyltransferase activity, leading to synthesis of 2',3'-cGAMP, a second messenger that binds to and activates Sting, thereby triggering the immune response via activation of the NF-kappa-B transcription factor. The protein is Cyclic GMP-AMP synthase-like receptor of Microplitis demolitor (Parasitoid wasp).